Reading from the N-terminus, the 490-residue chain is Betaine aldehyde dehydrogenase (490 aa).

The K(+) site is built by T26 and D93. Residue 150–152 (GAW) participates in NAD(+) binding. The active-site Charge relay system is the K162. 176 to 179 (KPSE) lines the NAD(+) pocket. V180 is a K(+) binding site. 230–233 (GVAT) is an NAD(+) binding site. L246 serves as a coordination point for K(+). The active-site Proton acceptor is E252. Residues G254, C286, and E387 each contribute to the NAD(+) site. C286 (nucleophile) is an active-site residue. Position 286 is a cysteine sulfenic acid (-SOH) (C286). K457 and G460 together coordinate K(+). Catalysis depends on E464, which acts as the Charge relay system.

The protein belongs to the aldehyde dehydrogenase family. In terms of assembly, dimer of dimers. The cofactor is K(+).

The enzyme catalyses betaine aldehyde + NAD(+) + H2O = glycine betaine + NADH + 2 H(+). It functions in the pathway amine and polyamine biosynthesis; betaine biosynthesis via choline pathway; betaine from betaine aldehyde: step 1/1. In terms of biological role, involved in the biosynthesis of the osmoprotectant glycine betaine. Catalyzes the irreversible oxidation of betaine aldehyde to the corresponding acid. This is Betaine aldehyde dehydrogenase from Stenotrophomonas maltophilia (strain R551-3).